We begin with the raw amino-acid sequence, 192 residues long: Cell division protein SepF (192 aa).

Residues 15–70 (GDPLEYEEDGEEYEQVYREENKREEARRATAGTAAAATPTAAAQASDAAPMGSGPA) are disordered. Residues 18–28 (LEYEEDGEEYE) show a composition bias toward acidic residues. Basic and acidic residues predominate over residues 29–42 (QVYREENKREEARR). Residues 43-63 (ATAGTAAAATPTAAAQASDAA) are compositionally biased toward low complexity.

It belongs to the SepF family. As to quaternary structure, homodimer. Interacts with FtsZ.

Its subcellular location is the cytoplasm. Its function is as follows. Cell division protein that is part of the divisome complex and is recruited early to the Z-ring. Probably stimulates Z-ring formation, perhaps through the cross-linking of FtsZ protofilaments. Its function overlaps with FtsA. In Gloeobacter violaceus (strain ATCC 29082 / PCC 7421), this protein is Cell division protein SepF.